The chain runs to 89 residues: Phosphoribulokinase, chloroplastic (89 aa).

Residues leucine 1 to leucine 22 are disordered.

The protein belongs to the phosphoribulokinase family.

It localises to the plastid. Its subcellular location is the chloroplast. The enzyme catalyses D-ribulose 5-phosphate + ATP = D-ribulose 1,5-bisphosphate + ADP + H(+). It functions in the pathway carbohydrate biosynthesis; Calvin cycle. With respect to regulation, light regulated via thioredoxin by reversible oxidation/reduction of sulfhydryl/disulfide groups. This is Phosphoribulokinase, chloroplastic from Vitis sp. (Grape).